The following is a 206-amino-acid chain: Ribosomal RNA large subunit methyltransferase E (206 aa).

S-adenosyl-L-methionine contacts are provided by glycine 55, tryptophan 57, aspartate 75, aspartate 91, and aspartate 116. The active-site Proton acceptor is the lysine 156.

This sequence belongs to the class I-like SAM-binding methyltransferase superfamily. RNA methyltransferase RlmE family.

It localises to the cytoplasm. It catalyses the reaction uridine(2552) in 23S rRNA + S-adenosyl-L-methionine = 2'-O-methyluridine(2552) in 23S rRNA + S-adenosyl-L-homocysteine + H(+). In terms of biological role, specifically methylates the uridine in position 2552 of 23S rRNA at the 2'-O position of the ribose in the fully assembled 50S ribosomal subunit. The chain is Ribosomal RNA large subunit methyltransferase E from Blochmanniella floridana.